The sequence spans 344 residues: Heat-inducible transcription repressor HrcA (344 aa).

The protein belongs to the HrcA family.

Functionally, negative regulator of class I heat shock genes (grpE-dnaK-dnaJ and groELS operons). Prevents heat-shock induction of these operons. The chain is Heat-inducible transcription repressor HrcA from Geobacillus kaustophilus (strain HTA426).